The following is an 800-amino-acid chain: MNQKVLQTLEYDKIKSQLSDFLSTPIGRQEADALQPITDVHIINYWLQETADAMMIDRLKGGIPLAKLADITPHLKRLNIQASLSATELAEIGNVLRNTSAISNFFIQMKDESIGESLEVLIEQAEQLETLPEVTKSIQTAIDSTGRINDEASYELKSVRGKIVGHENAIKNKMQEFTKGKTAQYLSDPIVTIRSDRYVLPVKAEYRSQFGGVVHDQSQTGLTLYIEPQAVVELSNKLSELRVKESAEEQRVLQELSAELEPHTNEIQQNVQILGHFDFVNAKARLAARLDAMQPTVSVENHISLRQAWHPLLDKKIAVANDISLGDSYKTIIITGPNTGGKTITIKTLGLLQLMAQSGLFITTRQPSTIGIFDEVFADIGDEQSIEQNLSTFSSHMANIVSMLDHIDDKTLVIFDELGAGTDPAEGAALAIAILDKVASLGAYTIATTHYPELKLYGYNRPETKNASMVFDVETLQPTYQFLMGVPGQSNALAIAKRLGFGEDVIGAAMALTDESDQDLNNMIADLVAQRDEVKKNNEELRSQLKATEEKSEALSEEQSKLEKERAHVILDAKNEANHIVAATKKQAEQLISEIRKERLRAGQRGELTEQELQARKGKLDQLRQNDSLEKNKILQKAKKVKELAPGDEITVRSYSQQGTLVKKHKNGQWEVEMGILKMLVDEDDIVKTEATVKAQKGKAKKKQQKIIRKTTSSGSTRASVKSSLDLRGVRYEAALTELDRYLDTAVLANISPVEIIHGKGTGALRQGVTEFLRSDRRVKSYHFASANAGGDGATIVELK.

Residue 336 to 343 participates in ATP binding; the sequence is GPNTGGKT. In terms of domain architecture, Smr spans 725–800; the sequence is LDLRGVRYEA…GDGATIVELK (76 aa).

The protein belongs to the DNA mismatch repair MutS family. MutS2 subfamily. Homodimer. Binds to stalled ribosomes, contacting rRNA.

Functionally, endonuclease that is involved in the suppression of homologous recombination and thus may have a key role in the control of bacterial genetic diversity. In terms of biological role, acts as a ribosome collision sensor, splitting the ribosome into its 2 subunits. Detects stalled/collided 70S ribosomes which it binds and splits by an ATP-hydrolysis driven conformational change. Acts upstream of the ribosome quality control system (RQC), a ribosome-associated complex that mediates the extraction of incompletely synthesized nascent chains from stalled ribosomes and their subsequent degradation. Probably generates substrates for RQC. This Leuconostoc mesenteroides subsp. mesenteroides (strain ATCC 8293 / DSM 20343 / BCRC 11652 / CCM 1803 / JCM 6124 / NCDO 523 / NBRC 100496 / NCIMB 8023 / NCTC 12954 / NRRL B-1118 / 37Y) protein is Endonuclease MutS2.